A 426-amino-acid polypeptide reads, in one-letter code: Phosphomethylpyrimidine synthase (426 aa).

Substrate-binding positions include Asn-65, Met-94, Tyr-123, His-162, 184–186 (SRG), 225–228 (DGMR), and Glu-264. His-268 provides a ligand contact to Zn(2+). Tyr-291 lines the substrate pocket. Zn(2+) is bound at residue His-332. Cys-408, Cys-411, and Cys-415 together coordinate [4Fe-4S] cluster.

Belongs to the ThiC family. [4Fe-4S] cluster serves as cofactor.

It carries out the reaction 5-amino-1-(5-phospho-beta-D-ribosyl)imidazole + S-adenosyl-L-methionine = 4-amino-2-methyl-5-(phosphooxymethyl)pyrimidine + CO + 5'-deoxyadenosine + formate + L-methionine + 3 H(+). Its pathway is cofactor biosynthesis; thiamine diphosphate biosynthesis. Catalyzes the synthesis of the hydroxymethylpyrimidine phosphate (HMP-P) moiety of thiamine from aminoimidazole ribotide (AIR) in a radical S-adenosyl-L-methionine (SAM)-dependent reaction. The polypeptide is Phosphomethylpyrimidine synthase (Methanococcus maripaludis (strain C7 / ATCC BAA-1331)).